A 234-amino-acid polypeptide reads, in one-letter code: ATP-dependent dethiobiotin synthetase BioD (234 aa).

14-19 (GVGKTI) is a binding site for ATP. Threonine 18 lines the Mg(2+) pocket. Residue lysine 39 is part of the active site. Position 43 (serine 43) interacts with substrate. Residues aspartate 56, 118–121 (EGAG), 178–179 (NH), and 208–210 (PWL) each bind ATP. Positions 56 and 118 each coordinate Mg(2+).

This sequence belongs to the dethiobiotin synthetase family. As to quaternary structure, homodimer. Mg(2+) is required as a cofactor.

It localises to the cytoplasm. The enzyme catalyses (7R,8S)-7,8-diammoniononanoate + CO2 + ATP = (4R,5S)-dethiobiotin + ADP + phosphate + 3 H(+). It participates in cofactor biosynthesis; biotin biosynthesis; biotin from 7,8-diaminononanoate: step 1/2. In terms of biological role, catalyzes a mechanistically unusual reaction, the ATP-dependent insertion of CO2 between the N7 and N8 nitrogen atoms of 7,8-diaminopelargonic acid (DAPA, also called 7,8-diammoniononanoate) to form a ureido ring. The protein is ATP-dependent dethiobiotin synthetase BioD of Marinobacter nauticus (strain ATCC 700491 / DSM 11845 / VT8) (Marinobacter aquaeolei).